Here is a 535-residue protein sequence, read N- to C-terminus: uncharacterized protein (535 aa).

Residues 1 to 34 (MKAIDNQIRNISSSHQDKHSDKVNSHQHHGKVDK) are disordered. A compositionally biased stretch (basic and acidic residues) spans 15 to 34 (HQDKHSDKVNSHQHHGKVDK).

This is an uncharacterized protein from Escherichia coli (strain K12).